A 1088-amino-acid chain; its full sequence is RNA-directed RNA polymerase (1088 aa).

The 187-residue stretch at leucine 501 to isoleucine 687 folds into the RdRp catalytic domain.

This sequence belongs to the reoviridae RNA-directed RNA polymerase family. In terms of assembly, interacts with VP3 (Potential). Interacts with VP2; this interaction activates VP1. Interacts with NSP5; this interaction is probably necessary for the formation of functional virus factories. Interacts with NSP2; this interaction is weak. Mg(2+) is required as a cofactor.

It localises to the virion. The catalysed reaction is RNA(n) + a ribonucleoside 5'-triphosphate = RNA(n+1) + diphosphate. In terms of biological role, RNA-directed RNA polymerase that is involved in both transcription and genome replication. Together with VP3 capping enzyme, forms an enzyme complex positioned near the channels situated at each of the five-fold vertices of the core. Following infection, the outermost layer of the virus is lost, leaving a double-layered particle (DLP) made up of the core and VP6 shell. VP1 then catalyzes the transcription of fully conservative plus-strand genomic RNAs that are extruded through the DLP's channels into the cytoplasm where they function as mRNAs for translation of viral proteins. One copy of each of the viral (+)RNAs is also recruited during core assembly, together with newly synthesized polymerase complexes and VP2. The polymerase of these novo-formed particles catalyzes the synthesis of complementary minus-strands leading to dsRNA formation. To do so, the polymerase specifically recognizes and binds 4 bases 5'-UGUG-3' in the conserved 3'-sequence of plus-strand RNA templates. VP2 presumably activates the autoinhibited VP1-RNA complex to coordinate packaging and genome replication. Once dsRNA synthesis is complete, the polymerase switches to the transcriptional mode, thus providing secondary transcription. The polypeptide is RNA-directed RNA polymerase (Chlorocebus pygerythrus (Vervet monkey)).